The following is a 361-amino-acid chain: DNA replication and repair protein RecF (361 aa).

Position 30-37 (30-37 (GDNAQGKT)) interacts with ATP.

The protein belongs to the RecF family.

Its subcellular location is the cytoplasm. The RecF protein is involved in DNA metabolism; it is required for DNA replication and normal SOS inducibility. RecF binds preferentially to single-stranded, linear DNA. It also seems to bind ATP. The polypeptide is DNA replication and repair protein RecF (Clostridium perfringens (strain ATCC 13124 / DSM 756 / JCM 1290 / NCIMB 6125 / NCTC 8237 / Type A)).